The sequence spans 393 residues: Adaptive-response sensory kinase SasA (393 aa).

Positions 171-393 constitute a Histidine kinase domain; it reads MLAHDLRSPL…CFHFTLPVFR (223 aa). Phosphohistidine; by autocatalysis is present on histidine 174.

As to quaternary structure, homooligomerizes. Interacts with KaiC. Participates in the KaiABC clock complex, whose core is composed of a KaiC homohexamer, 6 KaiB and up to 6 KaiA dimers. SasA and KaiB(fs) compete to bind to KaiC.

It catalyses the reaction ATP + protein L-histidine = ADP + protein N-phospho-L-histidine.. Member of the two-component regulatory system SasA/RpaA involved in genome-wide circadian gene expression. One of several clock output pathways. Participates in the Kai clock protein complex, the main circadian regulator in cyanobacteria, via its interaction with KaiC. KaiC enhances the autophosphorylation activity of SasA, which then transfers its phosphate group to RpaA to activate it. In addition to its output function, recruits fold-shifted KaiB (KaiB(fs)) to KaiC to cooperatively form the KaiB(6):KaiC(6) complex (independent of SasA kinase activity). Required for robustness of the circadian rhythm of gene expression and is involved in clock output, also required for adaptation to light/dark cycles. The polypeptide is Adaptive-response sensory kinase SasA (Gloeothece citriformis (strain PCC 7424) (Cyanothece sp. (strain PCC 7424))).